A 352-amino-acid chain; its full sequence is Peptide chain release factor 1 (352 aa).

Residue Gln233 is modified to N5-methylglutamine. Residues 288 to 309 (NAKDRKEQVGSGDRSERIRTYN) are disordered. Residues 289–306 (AKDRKEQVGSGDRSERIR) are compositionally biased toward basic and acidic residues.

It belongs to the prokaryotic/mitochondrial release factor family. Post-translationally, methylated by PrmC. Methylation increases the termination efficiency of RF1.

It localises to the cytoplasm. Functionally, peptide chain release factor 1 directs the termination of translation in response to the peptide chain termination codons UAG and UAA. In Helicobacter pylori (strain HPAG1), this protein is Peptide chain release factor 1.